Here is a 267-residue protein sequence, read N- to C-terminus: Protein HesA, heterocyst (267 aa).

Belongs to the HesA/MoeB/ThiF family.

In Trichormus variabilis (strain ATCC 29413 / PCC 7937) (Anabaena variabilis), this protein is Protein HesA, heterocyst (hesA1).